The primary structure comprises 46 residues: Antimicrobial peptide eNAP-1 (46 aa).

Cystine bridges form between C4/C16 and C10/C26.

Belongs to the granulin family.

The protein localises to the secreted. Has antimicrobial activity against Gram-negative and Gram-positive bacteria. The protein is Antimicrobial peptide eNAP-1 of Equus caballus (Horse).